The chain runs to 99 residues: Aspartyl/glutamyl-tRNA(Asn/Gln) amidotransferase subunit C (99 aa).

Belongs to the GatC family. Heterotrimer of A, B and C subunits.

It carries out the reaction L-glutamyl-tRNA(Gln) + L-glutamine + ATP + H2O = L-glutaminyl-tRNA(Gln) + L-glutamate + ADP + phosphate + H(+). The catalysed reaction is L-aspartyl-tRNA(Asn) + L-glutamine + ATP + H2O = L-asparaginyl-tRNA(Asn) + L-glutamate + ADP + phosphate + 2 H(+). Functionally, allows the formation of correctly charged Asn-tRNA(Asn) or Gln-tRNA(Gln) through the transamidation of misacylated Asp-tRNA(Asn) or Glu-tRNA(Gln) in organisms which lack either or both of asparaginyl-tRNA or glutaminyl-tRNA synthetases. The reaction takes place in the presence of glutamine and ATP through an activated phospho-Asp-tRNA(Asn) or phospho-Glu-tRNA(Gln). The sequence is that of Aspartyl/glutamyl-tRNA(Asn/Gln) amidotransferase subunit C from Burkholderia mallei (strain NCTC 10247).